Consider the following 160-residue polypeptide: Eukaryotic translation initiation factor 5A (160 aa).

A compositionally biased stretch (basic and acidic residues) spans 1–12; that stretch reads MSDEEHHFESKA. The interval 1–21 is disordered; sequence MSDEEHHFESKADAGASKTFP. Lys-52 bears the Hypusine mark.

This sequence belongs to the eIF-5A family. In terms of processing, lys-53 undergoes hypusination, a unique post-translational modification that consists in the addition of a butylamino group from spermidine to lysine side chain, leading to the formation of the unusual amino acid hypusine. eIF-5As are the only known proteins to undergo this modification, which is essential for their function.

Its function is as follows. Translation factor that promotes translation elongation and termination, particularly upon ribosome stalling at specific amino acid sequence contexts. Binds between the exit (E) and peptidyl (P) site of the ribosome and promotes rescue of stalled ribosome: specifically required for efficient translation of polyproline-containing peptides as well as other motifs that stall the ribosome. Acts as a ribosome quality control (RQC) cofactor by joining the RQC complex to facilitate peptidyl transfer during CAT tailing step. The polypeptide is Eukaryotic translation initiation factor 5A (Manihot esculenta (Cassava)).